We begin with the raw amino-acid sequence, 89 residues long: Acylphosphatase (89 aa).

The 87-residue stretch at 3 to 89 (CKRWILYGRV…GNYGSFHIEY (87 aa)) folds into the Acylphosphatase-like domain. Catalysis depends on residues Arg-18 and Asn-36.

It belongs to the acylphosphatase family.

It carries out the reaction an acyl phosphate + H2O = a carboxylate + phosphate + H(+). The protein is Acylphosphatase (acyP) of Petrotoga mobilis (strain DSM 10674 / SJ95).